Here is a 3661-residue protein sequence, read N- to C-terminus: Serine/threonine-protein kinase SMG1 (3661 aa).

Low complexity predominate over residues 1–11 (MSRRAPGSRLS). Disordered regions lie at residues 1–101 (MSRR…TYGR) and 116–144 (PEFTSVQHGSRALATKDMRKSQERSMSYS). Residues 1–1977 (MSRRAPGSRL…GVLLQQHMYV (1977 aa)) are interaction with SMG8 and SMG9. The span at 26–35 (NDWQPRTDSA) shows a compositional bias: polar residues. Composition is skewed to basic and acidic residues over residues 69–86 (QRHDDTRVHADIQNDEKG) and 129–138 (ATKDMRKSQE). K173 bears the N6-acetyllysine mark. Over residues 1154–1165 (RNSASPKHSLNG) the composition is skewed to polar residues. The tract at residues 1154-1175 (RNSASPKHSLNGESRKTVLSKP) is disordered. The FAT domain maps to 1283 to 1866 (RELQKSIEVQ…LYPAIVGTIS (584 aa)). An HEAT repeat occupies 1817–1852 (APWRGIIPQLFSRLNHPEVYVRQSICNLLCRVAQDS). Positions 1898–1919 (ECEGGSPPASQDSNKDEPKSGL) are disordered. Residues 2124–2463 (VGGTITILPT…MEREITRSLF (340 aa)) form the PI3K/PI4K catalytic domain. A G-loop region spans residues 2130–2136 (ILPTKTK). The interval 2332–2340 (GLGDRHLDN) is catalytic loop. The interval 2352–2376 (HIDYNVCFEKGKSLRVPEKVPFRMT) is activation loop. Residue T3550 is modified to Phosphothreonine. 2 positions are modified to phosphoserine: S3556 and S3570. The span at 3568 to 3579 (ATSADTPPSTVP) shows a compositional bias: polar residues. The tract at residues 3568-3591 (ATSADTPPSTVPGTGKSVACSPKK) is disordered. T3573 and T3577 each carry phosphothreonine. An FATC domain is found at 3629 to 3661 (RRMSVAEQVDYVIKEATNLDNLAQLYEGWTAWV).

Belongs to the PI3/PI4-kinase family. Component of the SMG1C complex composed of SMG1, SMG8 and SMG9; the recruitment of SMG8 to SMG1 N-terminus induces a large conformational change in the SMG1 C-terminal head domain containing the catalytic domain. Component of the transient SURF (SMG1-UPF1-eRF1-eRF3) complex. Part of a complex composed of SMG1, DHX34 and UPF1; within the complex DHX34 acts as a scaffolding protein to facilitate SMG1 phosphorylation of UPF1. Interacts with PRKCI. Interacts with TELO2 and TTI1. Interacts with RUVBL1 and RUVBL2. Interacts with UPF2. Interacts with DHX34 (via C-terminus); the interaction is RNA-independent. Mn(2+) serves as cofactor. Post-translationally, autophosphorylated. As to expression, widely expressed, with highest level in heart and skeletal muscle. Expressed in placenta, brain, lung and spleen, but not in liver.

The protein localises to the nucleus. It is found in the cytoplasm. It carries out the reaction L-seryl-[protein] + ATP = O-phospho-L-seryl-[protein] + ADP + H(+). The catalysed reaction is L-threonyl-[protein] + ATP = O-phospho-L-threonyl-[protein] + ADP + H(+). With respect to regulation, inhibited by caffeine, LY294002 and wortmannin. Serine/threonine protein kinase involved in both mRNA surveillance and genotoxic stress response pathways. Recognizes the substrate consensus sequence [ST]-Q. Plays a central role in nonsense-mediated decay (NMD) of mRNAs containing premature stop codons by phosphorylating UPF1/RENT1. Recruited by release factors to stalled ribosomes together with SMG8 and SMG9 (forming the SMG1C protein kinase complex), and UPF1 to form the transient SURF (SMG1-UPF1-eRF1-eRF3) complex. In EJC-dependent NMD, the SURF complex associates with the exon junction complex (EJC) through UPF2 and allows the formation of an UPF1-UPF2-UPF3 surveillance complex which is believed to activate NMD. Also acts as a genotoxic stress-activated protein kinase that displays some functional overlap with ATM. Can phosphorylate p53/TP53 and is required for optimal p53/TP53 activation after cellular exposure to genotoxic stress. Its depletion leads to spontaneous DNA damage and increased sensitivity to ionizing radiation (IR). May activate PRKCI but not PRKCZ. The protein is Serine/threonine-protein kinase SMG1 of Homo sapiens (Human).